The primary structure comprises 43 residues: METATLVAIFISCLLVSFTGYALYTAFGQPSKELRDPFEEHED.

Residues 7–27 (VAIFISCLLVSFTGYALYTAF) traverse the membrane as a helical segment.

It belongs to the PsbN family.

It localises to the plastid. The protein resides in the chloroplast thylakoid membrane. May play a role in photosystem I and II biogenesis. This is Protein PsbN from Zygnema circumcarinatum (Green alga).